The primary structure comprises 108 residues: Urease subunit beta (108 aa).

Belongs to the urease beta subunit family. As to quaternary structure, heterotrimer of UreA (gamma), UreB (beta) and UreC (alpha) subunits. Three heterotrimers associate to form the active enzyme.

The protein localises to the cytoplasm. It carries out the reaction urea + 2 H2O + H(+) = hydrogencarbonate + 2 NH4(+). It functions in the pathway nitrogen metabolism; urea degradation; CO(2) and NH(3) from urea (urease route): step 1/1. This is Urease subunit beta from Microcystis aeruginosa (strain NIES-843 / IAM M-2473).